We begin with the raw amino-acid sequence, 396 residues long: Glutamyl-tRNA reductase (396 aa).

Substrate contacts are provided by residues Thr-45 to Arg-48, Ser-101, Glu-106 to Gln-108, and Gln-112. The Nucleophile role is filled by Cys-46. NADP(+) is bound at residue Gly-177–Gly-182.

This sequence belongs to the glutamyl-tRNA reductase family. In terms of assembly, homodimer.

The catalysed reaction is (S)-4-amino-5-oxopentanoate + tRNA(Glu) + NADP(+) = L-glutamyl-tRNA(Glu) + NADPH + H(+). The protein operates within porphyrin-containing compound metabolism; protoporphyrin-IX biosynthesis; 5-aminolevulinate from L-glutamyl-tRNA(Glu): step 1/2. In terms of biological role, catalyzes the NADPH-dependent reduction of glutamyl-tRNA(Glu) to glutamate 1-semialdehyde (GSA). In Clostridium acetobutylicum (strain ATCC 824 / DSM 792 / JCM 1419 / IAM 19013 / LMG 5710 / NBRC 13948 / NRRL B-527 / VKM B-1787 / 2291 / W), this protein is Glutamyl-tRNA reductase.